The chain runs to 126 residues: Hydrogenase maturation factor HypA (126 aa).

Residue His2 coordinates Ni(2+). Zn(2+) is bound by residues Cys78, Cys81, Cys97, and Cys100.

Belongs to the HypA/HybF family.

Functionally, involved in the maturation of [NiFe] hydrogenases. Required for nickel insertion into the metal center of the hydrogenase. This chain is Hydrogenase maturation factor HypA, found in Methanococcus maripaludis (strain DSM 14266 / JCM 13030 / NBRC 101832 / S2 / LL).